The following is a 296-amino-acid chain: Putative F-box protein At1g67623 (296 aa).

One can recognise an F-box domain in the interval 21-70 (SLCLDSLPEDLLVEISSCTGASSLSAVRNLRLVSKSFRRICDEKYVFYRL).

The protein is Putative F-box protein At1g67623 of Arabidopsis thaliana (Mouse-ear cress).